The sequence spans 338 residues: MPGPTQALSPNGENNNDIIQDNGTTIIPFRKHTVRGERSYSWGMAVNVYSTSITQETMSRHDIIAWVNDILALNYTKVEQLCSGAAYCQFMDMLFPGCISLKKVKFQAKLEHEYIHNFKLLQASFKRMNVDKVIPVEKLVKGRFQDNLDFIQWFKKFFDANYDGKEYDPVEARQGQDALPPPDPGEQIFNLPKKSHHANSPTAGAAKSSPASKPGSTPSRPSSAKKAAPSSSASKSDKDLETQVIQLSEQVHSLKLALEGVEKERDFYFGKLREIELLCQEHGGENNDLVHRLMEVLYASEEHESHTEEHEGEEQVHEQPSSRRSTDSRSVSDNFHFV.

The disordered stretch occupies residues 1–21 (MPGPTQALSPNGENNNDIIQD). In terms of domain architecture, Calponin-homology (CH) spans 57-159 (TMSRHDIIAW…FIQWFKKFFD (103 aa)). 2 disordered regions span residues 171 to 241 (EARQ…KDLE) and 300 to 338 (SEEH…FHFV). Over residues 200–234 (SPTAGAAKSSPASKPGSTPSRPSSAKKAAPSSSAS) the composition is skewed to low complexity. Positions 236-306 (SDKDLETQVI…LYASEEHESH (71 aa)) constitute an EB1 C-terminal domain. Basic and acidic residues predominate over residues 300 to 327 (SEEHESHTEEHEGEEQVHEQPSSRRSTD). Over residues 328–338 (SRSVSDNFHFV) the composition is skewed to low complexity.

Belongs to the MAPRE family.

The protein localises to the cytoplasm. It localises to the cytoskeleton. May be involved in microtubule polymerization, and spindle function by stabilizing microtubules and anchoring them at centrosomes. In Gallus gallus (Chicken), this protein is Microtubule-associated protein RP/EB family member 2 (MAPRE2).